We begin with the raw amino-acid sequence, 199 residues long: Large ribosomal subunit protein bL25 (199 aa).

This sequence belongs to the bacterial ribosomal protein bL25 family. CTC subfamily. Part of the 50S ribosomal subunit; part of the 5S rRNA/L5/L18/L25 subcomplex. Contacts the 5S rRNA. Binds to the 5S rRNA independently of L5 and L18.

Its function is as follows. This is one of the proteins that binds to the 5S RNA in the ribosome where it forms part of the central protuberance. The sequence is that of Large ribosomal subunit protein bL25 from Caulobacter sp. (strain K31).